We begin with the raw amino-acid sequence, 613 residues long: Pesticidal crystal-like protein Cry16Aa (613 aa).

Belongs to the delta endotoxin family.

It localises to the secreted. In terms of biological role, toxin active on mosquito larvae of the species Aedes aegypti, Culex pipiens and Anopheles stephensi. This is Pesticidal crystal-like protein Cry16Aa (cry16Aa) from Paraclostridium bifermentans (Clostridium bifermentans).